Consider the following 527-residue polypeptide: Sensory neuron membrane protein 1 (527 aa).

Over 1–10 (MQLQKPLKIG) the chain is Cytoplasmic. Residues 11–31 (LGMMGAGLFGIIFGWVLFPVI) traverse the membrane as a helical segment. Residues 32 to 456 (LKSQLKKEMA…LKNQLFIPKR (425 aa)) lie on the Extracellular side of the membrane. Residues Asn67 and Asn229 are each glycosylated (N-linked (GlcNAc...) asparagine). Cystine bridges form between Cys268–Cys333, Cys297–Cys352, and Cys335–Cys341. N-linked (GlcNAc...) asparagine glycosylation occurs at Asn440. A helical transmembrane segment spans residues 457–477 (IVSVVKWLLAGVGFVGLVGSL). At 478-527 (VYQFKGKMINFALSPSSAPVTKVNPEINQQNQPKDISIIGESQNPPKVDM) the chain is on the cytoplasmic side.

This sequence belongs to the CD36 family. Principal component of the olfactory cilia membrane. Localizes to the antennal tissue with two to three fold higher expression in males compared to females.

The protein resides in the cell membrane. Plays an olfactory role that is not restricted to pheromone sensitivity. The sequence is that of Sensory neuron membrane protein 1 from Ostrinia nubilalis (European corn borer).